Consider the following 211-residue polypeptide: MHSIAIFGGTFDPVHNGHIKTSLAIQANFGFDSYYFLPCKSPAIKPPSFASSEQRVEMLKLALKPYPDFKIDTRELDRDTPSYMVYTLQSFRQEYTDSSLTLIIGYDGLLTLPQWYQWEKIISLANLLVINREEFFQQPVPKSVQTLLNQYRNDDKNILLNHHAGSICLYNAGHYDISSTKIREQLKQHKDVKNNLPDLVYDYIKKQGLYQ.

Belongs to the NadD family.

The enzyme catalyses nicotinate beta-D-ribonucleotide + ATP + H(+) = deamido-NAD(+) + diphosphate. The protein operates within cofactor biosynthesis; NAD(+) biosynthesis; deamido-NAD(+) from nicotinate D-ribonucleotide: step 1/1. Its function is as follows. Catalyzes the reversible adenylation of nicotinate mononucleotide (NaMN) to nicotinic acid adenine dinucleotide (NaAD). This Legionella pneumophila (strain Corby) protein is Probable nicotinate-nucleotide adenylyltransferase.